Consider the following 151-residue polypeptide: UPF0178 protein Hhal_1913 (151 aa).

The protein belongs to the UPF0178 family.

This chain is UPF0178 protein Hhal_1913, found in Halorhodospira halophila (strain DSM 244 / SL1) (Ectothiorhodospira halophila (strain DSM 244 / SL1)).